The following is a 563-amino-acid chain: Eukaryotic translation initiation factor 3 subunit D-1 (563 aa).

The segment at 98-167 (VQKPPHQRGR…GPPPKMRESS (70 aa)) is disordered. Residues 100 to 121 (KPPHQRGRFRNMRNSRSGRGRN) are compositionally biased toward basic residues. At Thr128 the chain carries Phosphothreonine. Residues 291-305 (EFDLLTVNESSVEPP) are RNA gate.

This sequence belongs to the eIF-3 subunit D family. As to quaternary structure, component of the eukaryotic translation initiation factor 3 (eIF-3) complex. The eIF-3 complex interacts with pix.

The protein resides in the cytoplasm. In terms of biological role, mRNA cap-binding component of the eukaryotic translation initiation factor 3 (eIF-3) complex, which is involved in protein synthesis of a specialized repertoire of mRNAs and, together with other initiation factors, stimulates binding of mRNA and methionyl-tRNAi to the 40S ribosome. The eIF-3 complex specifically targets and initiates translation of a subset of mRNAs involved in cell proliferation. In the eIF-3 complex, eif3d specifically recognizes and binds the 7-methylguanosine cap of a subset of mRNAs. This chain is Eukaryotic translation initiation factor 3 subunit D-1, found in Drosophila grimshawi (Hawaiian fruit fly).